The sequence spans 400 residues: Phosphoglycerate kinase (400 aa).

Residues 19–21 (DLN), R38, 61–64 (HLGR), R124, and R161 each bind substrate. Residues K211, G299, E330, and 356-359 (GGDS) contribute to the ATP site.

It belongs to the phosphoglycerate kinase family. As to quaternary structure, monomer.

It localises to the cytoplasm. The catalysed reaction is (2R)-3-phosphoglycerate + ATP = (2R)-3-phospho-glyceroyl phosphate + ADP. Its pathway is carbohydrate degradation; glycolysis; pyruvate from D-glyceraldehyde 3-phosphate: step 2/5. The sequence is that of Phosphoglycerate kinase from Frankia casuarinae (strain DSM 45818 / CECT 9043 / HFP020203 / CcI3).